A 78-amino-acid polypeptide reads, in one-letter code: Large ribosomal subunit protein bL28 (78 aa).

Residues M1 to A21 form a disordered region.

Belongs to the bacterial ribosomal protein bL28 family.

This chain is Large ribosomal subunit protein bL28, found in Shewanella baltica (strain OS223).